The sequence spans 691 residues: Elongation factor G (691 aa).

Positions 8–282 (ERVRNIGIAA…AVIDYLPAPI (275 aa)) constitute a tr-type G domain. GTP is bound by residues 17-24 (AHIDAGKT), 81-85 (DTPGH), and 135-138 (NKMD).

The protein belongs to the TRAFAC class translation factor GTPase superfamily. Classic translation factor GTPase family. EF-G/EF-2 subfamily.

It is found in the cytoplasm. Catalyzes the GTP-dependent ribosomal translocation step during translation elongation. During this step, the ribosome changes from the pre-translocational (PRE) to the post-translocational (POST) state as the newly formed A-site-bound peptidyl-tRNA and P-site-bound deacylated tRNA move to the P and E sites, respectively. Catalyzes the coordinated movement of the two tRNA molecules, the mRNA and conformational changes in the ribosome. This is Elongation factor G from Prochlorococcus marinus (strain SARG / CCMP1375 / SS120).